Reading from the N-terminus, the 271-residue chain is Probable redox regulatory protein SCO3349 (271 aa).

Disordered regions lie at residues 1–21 and 109–130; these read MPKT…KHIA and AEGT…TRPF. Basic and acidic residues predominate over residues 7–21; sequence AKDEKSAKKDKKHIA.

The protein belongs to the Rv0495c family.

Its function is as follows. Essential for maintaining intracellular redox homeostasis. In Streptomyces coelicolor (strain ATCC BAA-471 / A3(2) / M145), this protein is Probable redox regulatory protein SCO3349.